Reading from the N-terminus, the 291-residue chain is Gamma-sarcoglycan (291 aa).

Residues 38–58 traverse the membrane as a helical; Signal-anchor for type II membrane protein segment; sequence LFVLLLLIILLVNFALTIWIL. Residues 59 to 291 are Extracellular-facing; the sequence is KVMWFSPTGM…TCHEHSHICL (233 aa). Residue Asn-110 is glycosylated (N-linked (GlcNAc...) asparagine). 2 cysteine pairs are disulfide-bonded: Cys-265–Cys-290 and Cys-267–Cys-283.

It belongs to the sarcoglycan beta/delta/gamma/zeta family. In terms of assembly, interacts with the syntrophin SNTA1. Cross-link to form 2 major subcomplexes: one consisting of SGCB, SGCD and SGCG and the other consisting of SGCB and SGCD. The association between SGCB and SGCG is particularly strong while SGCA is loosely associated with the other sarcoglycans. Interacts with FLNC. In terms of processing, disulfide bonds are present.

It localises to the cell membrane. The protein localises to the sarcolemma. It is found in the cytoplasm. The protein resides in the cytoskeleton. Its function is as follows. Component of the sarcoglycan complex, a subcomplex of the dystrophin-glycoprotein complex which forms a link between the F-actin cytoskeleton and the extracellular matrix. In Canis lupus familiaris (Dog), this protein is Gamma-sarcoglycan (SGCG).